The chain runs to 287 residues: Orotidine 5'-phosphate decarboxylase (287 aa).

The active-site Proton donor is lysine 95.

This sequence belongs to the OMP decarboxylase family. Type 2 subfamily.

It catalyses the reaction orotidine 5'-phosphate + H(+) = UMP + CO2. Its pathway is pyrimidine metabolism; UMP biosynthesis via de novo pathway; UMP from orotate: step 2/2. The polypeptide is Orotidine 5'-phosphate decarboxylase (Albidiferax ferrireducens (strain ATCC BAA-621 / DSM 15236 / T118) (Rhodoferax ferrireducens)).